The following is a 238-amino-acid chain: Probable transglycosylase SceD 1 (238 aa).

The signal sequence occupies residues 1–27; the sequence is MKKTVVASTLAVGLGVTGFAAGNSADA. Residues 87 to 97 show a composition bias toward polar residues; it reads TNAPAQETAEQ. A disordered region spans residues 87 to 161; it reads TNAPAQETAE…SEASEGSSVN (75 aa). Residues 102–156 show a composition bias toward low complexity; that stretch reads EQPQQTEQASTEQPAQEAAPQTEETQQPQQEATTQTTSSSNESTSNESSSSEASE.

Belongs to the transglycosylase family. SceD subfamily.

The protein resides in the secreted. Its function is as follows. Is able to cleave peptidoglycan and affects clumping and separation of bacterial cells. In Staphylococcus saprophyticus subsp. saprophyticus (strain ATCC 15305 / DSM 20229 / NCIMB 8711 / NCTC 7292 / S-41), this protein is Probable transglycosylase SceD 1 (sceD1).